The chain runs to 405 residues: GTPase Obg (405 aa).

Residues 1 to 159 form the Obg domain; sequence MKFVDEVSIF…RDLKLELKVL (159 aa). Residues 127 to 148 are disordered; the sequence is NTRFKSSTNRAPRQTTPGKPGE. Residues 129-143 are compositionally biased toward polar residues; that stretch reads RFKSSTNRAPRQTTP. The region spanning 160–333 is the OBG-type G domain; that stretch reads ADVGLLGLPN…LCQDIMHYLD (174 aa). Residues 166 to 173, 191 to 195, 213 to 216, 283 to 286, and 314 to 316 each bind GTP; these read GLPNAGKS, FTTLV, DIPG, NKAD, and SAL. Residues S173 and T193 each coordinate Mg(2+). The span at 383 to 398 shows a compositional bias: acidic residues; that stretch reads ALEDEDDFDDEDDGDG. Residues 383–405 form a disordered region; the sequence is ALEDEDDFDDEDDGDGPEIFYVR.

Belongs to the TRAFAC class OBG-HflX-like GTPase superfamily. OBG GTPase family. Monomer. Mg(2+) is required as a cofactor.

The protein resides in the cytoplasm. In terms of biological role, an essential GTPase which binds GTP, GDP and possibly (p)ppGpp with moderate affinity, with high nucleotide exchange rates and a fairly low GTP hydrolysis rate. Plays a role in control of the cell cycle, stress response, ribosome biogenesis and in those bacteria that undergo differentiation, in morphogenesis control. The protein is GTPase Obg of Azotobacter vinelandii (strain DJ / ATCC BAA-1303).